Consider the following 430-residue polypeptide: Protein translocase subunit SecY (430 aa).

A run of 10 helical transmembrane segments spans residues 18–38 (IFFT…PAPG), 68–88 (FSIF…MQLL), 117–137 (LAIS…NNYL), 147–167 (IMSY…LIWL), 179–199 (GISI…LIQF), 217–237 (VLGL…VLEA), 269–289 (GVIP…LTLF), 308–328 (NVGM…YAFV), 368–388 (FVGS…TKFM), and 389–409 (GLPQ…GVAI).

Belongs to the SecY/SEC61-alpha family. In terms of assembly, component of the Sec protein translocase complex. Heterotrimer consisting of SecY, SecE and SecG subunits. The heterotrimers can form oligomers, although 1 heterotrimer is thought to be able to translocate proteins. Interacts with the ribosome. Interacts with SecDF, and other proteins may be involved. Interacts with SecA.

It localises to the cell membrane. In terms of biological role, the central subunit of the protein translocation channel SecYEG. Consists of two halves formed by TMs 1-5 and 6-10. These two domains form a lateral gate at the front which open onto the bilayer between TMs 2 and 7, and are clamped together by SecE at the back. The channel is closed by both a pore ring composed of hydrophobic SecY resides and a short helix (helix 2A) on the extracellular side of the membrane which forms a plug. The plug probably moves laterally to allow the channel to open. The ring and the pore may move independently. In Staphylococcus aureus (strain NCTC 8325 / PS 47), this protein is Protein translocase subunit SecY.